The following is a 221-amino-acid chain: NADH-ubiquinone oxidoreductase chain 4 (221 aa).

The next 5 membrane-spanning stretches (helical) occupy residues 20 to 40 (ALIA…LLTM), 45 to 65 (LTGS…LFCL), 78 to 98 (LLIN…WFLL), 121 to 141 (IVSW…FSAA), and 170 to 190 (FLLL…SNFC).

Belongs to the complex I subunit 4 family.

It is found in the mitochondrion membrane. The enzyme catalyses a ubiquinone + NADH + 5 H(+)(in) = a ubiquinol + NAD(+) + 4 H(+)(out). Its function is as follows. Core subunit of the mitochondrial membrane respiratory chain NADH dehydrogenase (Complex I) that is believed to belong to the minimal assembly required for catalysis. Complex I functions in the transfer of electrons from NADH to the respiratory chain. The immediate electron acceptor for the enzyme is believed to be ubiquinone. The sequence is that of NADH-ubiquinone oxidoreductase chain 4 (ND4) from Anopheles arabiensis (Mosquito).